Consider the following 93-residue polypeptide: Small ribosomal subunit protein uS19 (93 aa).

Belongs to the universal ribosomal protein uS19 family.

Protein S19 forms a complex with S13 that binds strongly to the 16S ribosomal RNA. The polypeptide is Small ribosomal subunit protein uS19 (Lacticaseibacillus paracasei (strain ATCC 334 / BCRC 17002 / CCUG 31169 / CIP 107868 / KCTC 3260 / NRRL B-441) (Lactobacillus paracasei)).